The sequence spans 208 residues: LexA repressor (208 aa).

The segment at residues 28–48 (RAEIARELGFRSANAAEEHLK) is a DNA-binding region (H-T-H motif). Active-site for autocatalytic cleavage activity residues include serine 125 and lysine 162.

This sequence belongs to the peptidase S24 family. As to quaternary structure, homodimer.

The enzyme catalyses Hydrolysis of Ala-|-Gly bond in repressor LexA.. Functionally, represses a number of genes involved in the response to DNA damage (SOS response), including recA and lexA. In the presence of single-stranded DNA, RecA interacts with LexA causing an autocatalytic cleavage which disrupts the DNA-binding part of LexA, leading to derepression of the SOS regulon and eventually DNA repair. The polypeptide is LexA repressor (Aliivibrio fischeri (strain ATCC 700601 / ES114) (Vibrio fischeri)).